The primary structure comprises 158 residues: Transcriptional regulatory protein DoeX (158 aa).

Residues 3–64 (LDRYDLKILE…RLNTDVLVKR (62 aa)) form the HTH asnC-type domain. The segment at residues 22-41 (KSKLAEAINLSVSPCWERVR) is a DNA-binding region (H-T-H motif).

The protein localises to the cytoplasm. In terms of biological role, acts as a transcriptional regulator. It binds DNA specifically to a fragment from the doeA promoter region. The sequence is that of Transcriptional regulatory protein DoeX (doeX) from Halomonas elongata (strain ATCC 33173 / DSM 2581 / NBRC 15536 / NCIMB 2198 / 1H9).